The following is a 291-amino-acid chain: Flavin-dependent thymidylate synthase (291 aa).

Residues 31-241 enclose the ThyX domain; sequence GFVRVVDYMG…PMVHAAFVEY (211 aa). FAD-binding positions include S77, 100–102, and E108; that span reads RHR. DUMP-binding positions include 97–100, 108–112, and R180; these read QWVR and EYSAR. The ThyX motif motif lies at 100-110; the sequence is RHRTASINEYS. 196–198 is a binding site for FAD; that stretch reads NLH. R207 provides a ligand contact to dUMP. The Involved in ionization of N3 of dUMP, leading to its activation role is filled by R207.

The protein belongs to the thymidylate synthase ThyX family. Homotetramer. It depends on FAD as a cofactor.

It catalyses the reaction dUMP + (6R)-5,10-methylene-5,6,7,8-tetrahydrofolate + NADPH + H(+) = dTMP + (6S)-5,6,7,8-tetrahydrofolate + NADP(+). The protein operates within pyrimidine metabolism; dTTP biosynthesis. Catalyzes the reductive methylation of 2'-deoxyuridine-5'-monophosphate (dUMP) to 2'-deoxythymidine-5'-monophosphate (dTMP) while utilizing 5,10-methylenetetrahydrofolate (mTHF) as the methyl donor, and NADPH and FADH(2) as the reductant. This Anaplasma marginale (strain St. Maries) protein is Flavin-dependent thymidylate synthase.